The sequence spans 470 residues: Cupincin (470 aa).

Positions 1-34 (MAKKKTSSSMARSQLAALLISLCFLSLASNAVGW) are cleaved as a signal peptide. Basic and acidic residues predominate over residues 36-52 (RRGEREEEDERRRHGGE). Disordered stretches follow at residues 36–59 (RRGE…PYHL) and 240–261 (KSCS…PSSL). Cupin type-1 domains follow at residues 57–215 (YHLG…EELE) and 259–445 (SSLT…AREA). The N-linked (GlcNAc...) asparagine glycan is linked to asparagine 297. Positions 330–368 (PHVSGGGSSERREREREHGRRREEEQGEEEHGERGEKAR) are disordered. Basic and acidic residues predominate over residues 338–367 (SERREREREHGRRREEEQGEEEHGERGEKA). Histidine 347, glutamate 352, and histidine 360 together coordinate Zn(2+).

This sequence belongs to the 7S seed storage protein family. Homotrimer. Requires Zn(2+) as cofactor.

Its subcellular location is the secreted. Its function is as follows. Seed storage protein. Globulin-like protein that acts as a zinc metalloprotease. Cleaves specifically between Leu-15 and Tyr-16 of insulin B chain, and Gln-1 and Leu-2 of neurotensin (NT) peptide in vitro. May play a role as an initiating endopeptidase in germinating seeds. The chain is Cupincin from Oryza sativa subsp. japonica (Rice).